Here is a 228-residue protein sequence, read N- to C-terminus: ATP-dependent dethiobiotin synthetase BioD (228 aa).

12-17 serves as a coordination point for ATP; it reads DVGKTY. Position 16 (Thr16) interacts with Mg(2+). The active site involves Lys37. ATP-binding positions include Asp53, 114–117, 174–175, 203–205, and Asn210; these read EGMG, ND, and PFI. Mg(2+) is bound by residues Asp53 and Glu114.

The protein belongs to the dethiobiotin synthetase family. Homodimer. The cofactor is Mg(2+).

The protein localises to the cytoplasm. The enzyme catalyses (7R,8S)-7,8-diammoniononanoate + CO2 + ATP = (4R,5S)-dethiobiotin + ADP + phosphate + 3 H(+). The protein operates within cofactor biosynthesis; biotin biosynthesis; biotin from 7,8-diaminononanoate: step 1/2. In terms of biological role, catalyzes a mechanistically unusual reaction, the ATP-dependent insertion of CO2 between the N7 and N8 nitrogen atoms of 7,8-diaminopelargonic acid (DAPA, also called 7,8-diammoniononanoate) to form a ureido ring. The polypeptide is ATP-dependent dethiobiotin synthetase BioD (Nitrosopumilus maritimus (strain SCM1)).